The primary structure comprises 460 residues: Argininosuccinate lyase (460 aa).

The protein belongs to the lyase 1 family. Argininosuccinate lyase subfamily.

The protein localises to the cytoplasm. The catalysed reaction is 2-(N(omega)-L-arginino)succinate = fumarate + L-arginine. The protein operates within amino-acid biosynthesis; L-arginine biosynthesis; L-arginine from L-ornithine and carbamoyl phosphate: step 3/3. In Desulforamulus reducens (strain ATCC BAA-1160 / DSM 100696 / MI-1) (Desulfotomaculum reducens), this protein is Argininosuccinate lyase.